The chain runs to 172 residues: Small ribosomal subunit protein uS5 (172 aa).

An S5 DRBM domain is found at 17–80; that stretch reads LREKMISVNR…EQARRNMFKV (64 aa).

The protein belongs to the universal ribosomal protein uS5 family. In terms of assembly, part of the 30S ribosomal subunit. Contacts proteins S4 and S8.

With S4 and S12 plays an important role in translational accuracy. In terms of biological role, located at the back of the 30S subunit body where it stabilizes the conformation of the head with respect to the body. This is Small ribosomal subunit protein uS5 from Paraburkholderia phymatum (strain DSM 17167 / CIP 108236 / LMG 21445 / STM815) (Burkholderia phymatum).